A 126-amino-acid chain; its full sequence is Large ribosomal subunit protein bL12 (126 aa).

Belongs to the bacterial ribosomal protein bL12 family. As to quaternary structure, homodimer. Part of the ribosomal stalk of the 50S ribosomal subunit. Forms a multimeric L10(L12)X complex, where L10 forms an elongated spine to which 2 to 4 L12 dimers bind in a sequential fashion. Binds GTP-bound translation factors.

Its function is as follows. Forms part of the ribosomal stalk which helps the ribosome interact with GTP-bound translation factors. Is thus essential for accurate translation. This chain is Large ribosomal subunit protein bL12, found in Desulfatibacillum aliphaticivorans.